We begin with the raw amino-acid sequence, 124 residues long: Small ribosomal subunit protein uS12 (124 aa).

Asp-89 carries the post-translational modification 3-methylthioaspartic acid.

It belongs to the universal ribosomal protein uS12 family. As to quaternary structure, part of the 30S ribosomal subunit. Contacts proteins S8 and S17. May interact with IF1 in the 30S initiation complex.

Its function is as follows. With S4 and S5 plays an important role in translational accuracy. Interacts with and stabilizes bases of the 16S rRNA that are involved in tRNA selection in the A site and with the mRNA backbone. Located at the interface of the 30S and 50S subunits, it traverses the body of the 30S subunit contacting proteins on the other side and probably holding the rRNA structure together. The combined cluster of proteins S8, S12 and S17 appears to hold together the shoulder and platform of the 30S subunit. This Pasteurella multocida (strain Pm70) protein is Small ribosomal subunit protein uS12.